The following is a 543-amino-acid chain: Chaperonin GroEL (543 aa).

ATP-binding positions include 30 to 33, K51, 87 to 91, G415, and D496; these read TLGP and DGTTT.

The protein belongs to the chaperonin (HSP60) family. In terms of assembly, forms a cylinder of 14 subunits composed of two heptameric rings stacked back-to-back. Interacts with the co-chaperonin GroES.

Its subcellular location is the cytoplasm. It carries out the reaction ATP + H2O + a folded polypeptide = ADP + phosphate + an unfolded polypeptide.. In terms of biological role, together with its co-chaperonin GroES, plays an essential role in assisting protein folding. The GroEL-GroES system forms a nano-cage that allows encapsulation of the non-native substrate proteins and provides a physical environment optimized to promote and accelerate protein folding. The sequence is that of Chaperonin GroEL from Gluconobacter oxydans (strain 621H) (Gluconobacter suboxydans).